A 75-amino-acid chain; its full sequence is Conotoxin TsMEKL-011 (75 aa).

The first 19 residues, 1–19 (MEKLTILLLVAAVLMSTQA), serve as a signal peptide directing secretion. Residues 20–45 (LIQRGGAKRRKVNFFSIREPGAEDWR) constitute a propeptide that is removed on maturation. 3 cysteine pairs are disulfide-bonded: cysteine 49–cysteine 63, cysteine 56–cysteine 67, and cysteine 62–cysteine 71.

Belongs to the conotoxin O2 superfamily. In terms of tissue distribution, expressed by the venom duct.

It localises to the secreted. This Conus tessulatus (Tessellate cone) protein is Conotoxin TsMEKL-011.